Reading from the N-terminus, the 448-residue chain is Histidinol dehydrogenase (448 aa).

Tyr136, Gln197, and Asn220 together coordinate NAD(+). Substrate is bound by residues Ser243, Gln265, and His268. Residues Gln265 and His268 each contribute to the Zn(2+) site. Active-site proton acceptor residues include Glu333 and His334. Residues His334, Asp367, Glu421, and His426 each coordinate substrate. Residue Asp367 coordinates Zn(2+). Residue His426 participates in Zn(2+) binding.

This sequence belongs to the histidinol dehydrogenase family. It depends on Zn(2+) as a cofactor.

It catalyses the reaction L-histidinol + 2 NAD(+) + H2O = L-histidine + 2 NADH + 3 H(+). The protein operates within amino-acid biosynthesis; L-histidine biosynthesis; L-histidine from 5-phospho-alpha-D-ribose 1-diphosphate: step 9/9. Functionally, catalyzes the sequential NAD-dependent oxidations of L-histidinol to L-histidinaldehyde and then to L-histidine. The polypeptide is Histidinol dehydrogenase (Pseudomonas savastanoi pv. phaseolicola (strain 1448A / Race 6) (Pseudomonas syringae pv. phaseolicola (strain 1448A / Race 6))).